We begin with the raw amino-acid sequence, 507 residues long: Probable lipid II flippase MurJ (507 aa).

A run of 13 helical transmembrane segments spans residues 3-23 (LFRSGIILAFLTFIARIFGLV), 54-74 (IFAEGALSSVFIPIYNEKMLI), 92-112 (LTLIVIIALMQIFMPQLILCI), 132-152 (ITIPYLIFVSLTALLGGILNS), 156-176 (FAAFAFSPIILSVCVIIFTLI), 185-205 (ISISVSLIIAGILQVVFMFIC), 268-288 (IYQFPLSIIGTSFSTILLPEM), 310-330 (IGLLLSLPATFGIIILSHPIT), 351-371 (ISAFALGLPAFILAKILTPIF), 379-399 (TPLKITLFSIIINTNMNLLLM), 405-425 (IGIAVGTSIAAWYNLGLLYSY), 438-458 (IKLFCAKILLCCTLMSIIIAL), and 472-492 (LLIKVSMLGSTIIIGVAIFFG).

The protein belongs to the MurJ/MviN family.

The protein localises to the cell inner membrane. Its pathway is cell wall biogenesis; peptidoglycan biosynthesis. Functionally, involved in peptidoglycan biosynthesis. Transports lipid-linked peptidoglycan precursors from the inner to the outer leaflet of the cytoplasmic membrane. This chain is Probable lipid II flippase MurJ, found in Rickettsia prowazekii (strain Madrid E).